Reading from the N-terminus, the 607-residue chain is MVCTRKTKTLVSTCVILSGMTNIICLLYVGWVTNYIASVYVRGQEPAPDKKLEEDKGDTLKIIERLDHLENVIKQHIQEAPAKPEEAEAEPFTDSSLFAHWGQELSPEGRRVALKQFQYYGYNAYLSDRLPLDRPLPDLRPSGCRNLSFPDSLPEVSIVFIFVNEALSVLLRSIHSAMERTPPHLLKEIILVDDNSSNEELKEKLTEYVDKVNSQKPGFIKVVRHSKQEGLIRSRVSGWRAATAPVVALFDAHVEFNVGWAEPVLTRIKENRKRIISPSFDNIKYDNFEIEEYPLAAQGFDWELWCRYLNPPKAWWKLENSTAPIRSPALIGCFIVDRQYFQEIGLLDEGMEVYGGENVELGIRVWQCGGSVEVLPCSRIAHIERAHKPYTEDLTAHVRRNALRVAEVWMDEFKSHVYMAWNIPQEDSGIDIGDITARKALRKQLQCKTFRWYLVSVYPEMRMYSDIIAYGVLQNSLKTDLCLDQGPDTENVPIMYICHGMTPQNVYYTSSQQIHVGILSPTVDDDDNRCLVDVNSRPRLIECSYAKAKRMKLHWQFSQGGPIQNRKSKRCLELQENSDLEFGFQLVLQKCSGQHWSITNVLRSLAS.

At 1 to 12 the chain is on the cytoplasmic side; sequence MVCTRKTKTLVS. A helical; Signal-anchor for type II membrane protein membrane pass occupies residues 13–35; that stretch reads TCVILSGMTNIICLLYVGWVTNY. Residues 36-607 lie on the Lumenal side of the membrane; sequence IASVYVRGQE…ITNVLRSLAS (572 aa). Disulfide bonds link Cys144–Cys377, Cys368–Cys447, Cys482–Cys498, Cys530–Cys543, and Cys571–Cys591. Asn146 is a glycosylation site (N-linked (GlcNAc...) asparagine). Residues 153–267 are catalytic subdomain A; sequence LPEVSIVFIF…VGWAEPVLTR (115 aa). Asp194 contacts substrate. N-linked (GlcNAc...) asparagine glycosylation is present at Asn195. Mn(2+) is bound by residues Asp251 and His253. N-linked (GlcNAc...) asparagine glycosylation occurs at Asn320. The catalytic subdomain B stretch occupies residues 324 to 385; the sequence is PIRSPALIGC…PCSRIAHIER (62 aa). His382 is a Mn(2+) binding site. Substrate contacts are provided by Arg385 and Tyr390. In terms of domain architecture, Ricin B-type lectin spans 469-599; it reads AYGVLQNSLK…KCSGQHWSIT (131 aa).

It belongs to the glycosyltransferase 2 family. GalNAc-T subfamily. It depends on Mn(2+) as a cofactor.

Its subcellular location is the golgi apparatus membrane. The catalysed reaction is L-seryl-[protein] + UDP-N-acetyl-alpha-D-galactosamine = a 3-O-[N-acetyl-alpha-D-galactosaminyl]-L-seryl-[protein] + UDP + H(+). The enzyme catalyses L-threonyl-[protein] + UDP-N-acetyl-alpha-D-galactosamine = a 3-O-[N-acetyl-alpha-D-galactosaminyl]-L-threonyl-[protein] + UDP + H(+). It functions in the pathway protein modification; protein glycosylation. Catalyzes the initial reaction in O-linked oligosaccharide biosynthesis, the transfer of an N-acetyl-D-galactosamine (GalNAc) residue from UDP-GalNAc to a serine or threonine residue on the protein receptor. The polypeptide is Polypeptide N-acetylgalactosaminyltransferase 18 (GALNT18) (Homo sapiens (Human)).